The chain runs to 154 residues: Myoglobin (154 aa).

The Globin domain maps to 2–148; that stretch reads GLSDAEWQLV…FRNDIAAQYK (147 aa). At Ser4 the chain carries Phosphoserine. Residue His65 coordinates nitrite. O2 is bound at residue His65. A Phosphothreonine modification is found at Thr68. His94 contributes to the heme b binding site.

The protein belongs to the globin family. In terms of assembly, monomeric.

It localises to the cytoplasm. The protein resides in the sarcoplasm. The enzyme catalyses Fe(III)-heme b-[protein] + nitric oxide + H2O = Fe(II)-heme b-[protein] + nitrite + 2 H(+). It carries out the reaction H2O2 + AH2 = A + 2 H2O. In terms of biological role, monomeric heme protein which primary function is to store oxygen and facilitate its diffusion within muscle tissues. Reversibly binds oxygen through a pentacoordinated heme iron and enables its timely and efficient release as needed during periods of heightened demand. Depending on the oxidative conditions of tissues and cells, and in addition to its ability to bind oxygen, it also has a nitrite reductase activity whereby it regulates the production of bioactive nitric oxide. Under stress conditions, like hypoxia and anoxia, it also protects cells against reactive oxygen species thanks to its pseudoperoxidase activity. The protein is Myoglobin (MB) of Oryctolagus cuniculus (Rabbit).